The sequence spans 159 residues: Cathelicidin-5 (159 aa).

The first 29 residues, 1-29 (METQRASLSLGRWSLWLLLLGLALPSASA), serve as a signal peptide directing secretion. Residue Q30 is modified to Pyrrolidone carboxylic acid. Residues 30 to 131 (QALSYREAVL…DITCAVPQSV (102 aa)) constitute a propeptide that is removed on maturation. 2 cysteine pairs are disulfide-bonded: C86–C97 and C108–C125.

Belongs to the cathelicidin family.

The protein resides in the secreted. In terms of biological role, exerts a potent antimicrobial activity against Gram-negative and Gram-positive bacteria, including methicillin-resistant Staphylococcus aureus, and fungi. The protein is Cathelicidin-5 (CATHL5) of Bos taurus (Bovine).